Reading from the N-terminus, the 215-residue chain is MKHTSDTPSNSDMPSDSQATQPNASATGQAAHAYSSQAQRASADAQAVAGDEAAVAEAVADVDVAELRRQLEAAEEKARQNYENWARATAEGENIRRRGQDDVAKAHKFAIEGFAEYLLPVMDSLQAALADTSGDATKLREGVELTLKQLYAAFEKGRVTELNPVGEKFDPHRHQAISMVPADQEANTVVAVLQRGYTLADRVLRPALVTVAAPK.

Over residues 1–28 the composition is skewed to polar residues; sequence MKHTSDTPSNSDMPSDSQATQPNASATG. The interval 1-52 is disordered; the sequence is MKHTSDTPSNSDMPSDSQATQPNASATGQAAHAYSSQAQRASADAQAVAGDE. The span at 29 to 52 shows a compositional bias: low complexity; it reads QAAHAYSSQAQRASADAQAVAGDE.

The protein belongs to the GrpE family. As to quaternary structure, homodimer.

The protein localises to the cytoplasm. Its function is as follows. Participates actively in the response to hyperosmotic and heat shock by preventing the aggregation of stress-denatured proteins, in association with DnaK and GrpE. It is the nucleotide exchange factor for DnaK and may function as a thermosensor. Unfolded proteins bind initially to DnaJ; upon interaction with the DnaJ-bound protein, DnaK hydrolyzes its bound ATP, resulting in the formation of a stable complex. GrpE releases ADP from DnaK; ATP binding to DnaK triggers the release of the substrate protein, thus completing the reaction cycle. Several rounds of ATP-dependent interactions between DnaJ, DnaK and GrpE are required for fully efficient folding. The sequence is that of Protein GrpE from Ralstonia pickettii (strain 12J).